Reading from the N-terminus, the 379-residue chain is MKILRKNHPLLKIVNHSFIDLPTPSNISSWWNFGSLLGVCLMIQILTGLFLAMHYTSDTTTAFSSVAHICRDVNYGWLIRYLHANGASMFFICLFIHVGRGIYYGSYVLSETWNIGIILFLTTMATAFVGYVLPWGQMSFWGATVITNLLSAIPYIGSTLVEWIWGGFSVDKATLTRFFAFHFILPFIITAFALVHLLFLHETGSNNPSGLNSDSDKIPFHPYYTIKDLLGIFLLLLALMILALFFPDVLGDPDNFTPANPLNTPAHIKPEWYFLFAYAILRSIPNKLGGVLALILSILILAIFPLLNVSKQHGLIFRPITQTIYWTFIANLLVLTWIGGQPVEYPFTTIGQIASITYFTXIIILMPVSNTIXNNIIKL.

4 helical membrane-spanning segments follow: residues 33–53 (FGSL…FLAM), 77–98 (WLIR…FIHV), 113–133 (WNIG…GYVL), and 178–198 (FFAF…VHLL). Heme b-binding residues include histidine 83 and histidine 97. Heme b is bound by residues histidine 182 and histidine 196. Histidine 201 is a binding site for a ubiquinone. The next 4 helical transmembrane spans lie at 226 to 246 (IKDL…ALFF), 288 to 308 (LGGV…PLLN), 320 to 340 (ITQT…WIGG), and 347 to 367 (FTTI…ILMP).

Belongs to the cytochrome b family. The cytochrome bc1 complex contains 11 subunits: 3 respiratory subunits (MT-CYB, CYC1 and UQCRFS1), 2 core proteins (UQCRC1 and UQCRC2) and 6 low-molecular weight proteins (UQCRH/QCR6, UQCRB/QCR7, UQCRQ/QCR8, UQCR10/QCR9, UQCR11/QCR10 and a cleavage product of UQCRFS1). This cytochrome bc1 complex then forms a dimer. The cofactor is heme b.

The protein localises to the mitochondrion inner membrane. Its function is as follows. Component of the ubiquinol-cytochrome c reductase complex (complex III or cytochrome b-c1 complex) that is part of the mitochondrial respiratory chain. The b-c1 complex mediates electron transfer from ubiquinol to cytochrome c. Contributes to the generation of a proton gradient across the mitochondrial membrane that is then used for ATP synthesis. This Akodon affinis (Colombian grass mouse) protein is Cytochrome b (MT-CYB).